The chain runs to 420 residues: Bile acid-CoA:amino acid N-acyltransferase (420 aa).

Lysine 40 bears the N6-succinyllysine mark. A Phosphoserine modification is found at serine 125. Catalysis depends on charge relay system residues cysteine 235 and aspartate 328. N6-succinyllysine is present on residues lysine 346 and lysine 350. Catalysis depends on histidine 362, which acts as the Charge relay system. Position 409 is an N6-succinyllysine (lysine 409). Serine 418 carries the phosphoserine modification.

The protein belongs to the C/M/P thioester hydrolase family. In terms of assembly, monomer. As to expression, highly expressed in liver, kidney, gallbladder, proximal intestine and distal intestine. Weakly expressed in adrenal gland, lung, brain and muscle.

Its subcellular location is the cytoplasm. It is found in the cytosol. The protein localises to the peroxisome. The enzyme catalyses choloyl-CoA + glycine = glycocholate + CoA + H(+). It carries out the reaction hexadecanoyl-CoA + H2O = hexadecanoate + CoA + H(+). It catalyses the reaction choloyl-CoA + H2O = cholate + CoA + H(+). The catalysed reaction is chenodeoxycholoyl-CoA + H2O = chenodeoxycholate + CoA + H(+). The enzyme catalyses eicosanoyl-CoA + H2O = eicosanoate + CoA + H(+). It carries out the reaction octadecanoyl-CoA + H2O = octadecanoate + CoA + H(+). It catalyses the reaction docosanoyl-CoA + H2O = docosanoate + CoA + H(+). The catalysed reaction is tetracosanoyl-CoA + H2O = tetracosanoate + CoA + H(+). The enzyme catalyses hexacosanoyl-CoA + H2O = hexacosanoate + CoA + H(+). It carries out the reaction dodecanoyl-CoA + H2O = dodecanoate + CoA + H(+). It catalyses the reaction tetradecanoyl-CoA + H2O = tetradecanoate + CoA + H(+). The catalysed reaction is choloyl-CoA + taurine = taurocholate + CoA + H(+). The enzyme catalyses chenodeoxycholoyl-CoA + glycine = glycochenodeoxycholate + CoA + H(+). It carries out the reaction chenodeoxycholoyl-CoA + taurine = taurochenodeoxycholate + CoA + H(+). It catalyses the reaction eicosanoyl-CoA + glycine = N-eicosanoylglycinate + CoA + H(+). The catalysed reaction is hexacosanoyl-CoA + glycine = N-hexacosanoylglycine + CoA + H(+). The enzyme catalyses docosanoyl-CoA + glycine = N-docosanoylglycine + CoA + H(+). Its function is as follows. Catalyzes the amidation of bile acids (BAs) with the amino acid taurine. Selective for taurine conjugation of cholyl CoA and only taurine-conjugated BAs are found in bile. Amidation of BAs in the liver with taurine prior to their excretion into bile is an important biochemical event in bile acid metabolism. This conjugation (or amidation) plays several important biological roles in that it promotes the secretion of BAs and cholesterol into bile and increases the detergent properties of BAs in the intestine, which facilitates lipid and vitamin absorption. May also act as an acyl-CoA thioesterase that regulates intracellular levels of free fatty acids. In vitro, catalyzes the hydrolysis of long- and very long-chain saturated acyl-CoAs to the free fatty acid and coenzyme A (CoASH), and conjugates glycine to these acyl-CoAs. In Mus musculus (Mouse), this protein is Bile acid-CoA:amino acid N-acyltransferase (Baat).